Here is a 392-residue protein sequence, read N- to C-terminus: ATP phosphoribosyltransferase regulatory subunit (392 aa).

This sequence belongs to the class-II aminoacyl-tRNA synthetase family. HisZ subfamily. In terms of assembly, heteromultimer composed of HisG and HisZ subunits.

It localises to the cytoplasm. The protein operates within amino-acid biosynthesis; L-histidine biosynthesis; L-histidine from 5-phospho-alpha-D-ribose 1-diphosphate: step 1/9. Its function is as follows. Required for the first step of histidine biosynthesis. May allow the feedback regulation of ATP phosphoribosyltransferase activity by histidine. This is ATP phosphoribosyltransferase regulatory subunit from Geobacillus sp. (strain WCH70).